Here is a 203-residue protein sequence, read N- to C-terminus: Sec-independent protein translocase protein TatB (203 aa).

A helical transmembrane segment spans residues 1 to 21 (MFDIGWTELLVIAVVLIVVVG). The segment at 179-203 (KPKRTTAVRKPATLKKPAQTKKDEA) is disordered.

This sequence belongs to the TatB family. In terms of assembly, the Tat system comprises two distinct complexes: a TatABC complex, containing multiple copies of TatA, TatB and TatC subunits, and a separate TatA complex, containing only TatA subunits. Substrates initially bind to the TatABC complex, which probably triggers association of the separate TatA complex to form the active translocon.

The protein localises to the cell inner membrane. Its function is as follows. Part of the twin-arginine translocation (Tat) system that transports large folded proteins containing a characteristic twin-arginine motif in their signal peptide across membranes. Together with TatC, TatB is part of a receptor directly interacting with Tat signal peptides. TatB may form an oligomeric binding site that transiently accommodates folded Tat precursor proteins before their translocation. The chain is Sec-independent protein translocase protein TatB from Rhizobium johnstonii (strain DSM 114642 / LMG 32736 / 3841) (Rhizobium leguminosarum bv. viciae).